Here is a 329-residue protein sequence, read N- to C-terminus: Glycosyltransferase family protein 64 C3 (329 aa).

A signal peptide spans 1-27 (MGVKSVRFSIWFLFVVTDLVFCRTLSG). Asn99 is a glycosylation site (N-linked (GlcNAc...) asparagine). Substrate contacts are provided by residues 118-123 (SSLNAR), 139-141 (DDD), Arg169, 226-230 (RNCED), and 271-284 (VGLSSRRVEHRKRR). Asp141 contacts Mn(2+). A disulfide bond links Cys228 and Cys287. Asp230 is a catalytic residue. Residues 268 to 284 (VRDVGLSSRRVEHRKRR) are substrate binding.

The protein belongs to the glycosyltransferase 64 family. Mn(2+) serves as cofactor.

The protein operates within protein modification; protein glycosylation. Functionally, probable glycosyltransferase. This chain is Glycosyltransferase family protein 64 C3, found in Arabidopsis thaliana (Mouse-ear cress).